The primary structure comprises 1368 residues: DNA-directed RNA polymerase subunit beta (1368 aa).

Belongs to the RNA polymerase beta chain family. As to quaternary structure, the RNAP catalytic core consists of 2 alpha, 1 beta, 1 beta' and 1 omega subunit. When a sigma factor is associated with the core the holoenzyme is formed, which can initiate transcription.

The enzyme catalyses RNA(n) + a ribonucleoside 5'-triphosphate = RNA(n+1) + diphosphate. Functionally, DNA-dependent RNA polymerase catalyzes the transcription of DNA into RNA using the four ribonucleoside triphosphates as substrates. This chain is DNA-directed RNA polymerase subunit beta, found in Burkholderia thailandensis (strain ATCC 700388 / DSM 13276 / CCUG 48851 / CIP 106301 / E264).